The sequence spans 504 residues: Maturase K (504 aa).

The protein belongs to the intron maturase 2 family. MatK subfamily.

It localises to the plastid. Its subcellular location is the chloroplast. Its function is as follows. Usually encoded in the trnK tRNA gene intron. Probably assists in splicing its own and other chloroplast group II introns. This chain is Maturase K, found in Quercus rubra (Northern red oak).